The primary structure comprises 152 residues: Ribosome maturation factor RimP (152 aa).

This sequence belongs to the RimP family.

It localises to the cytoplasm. Required for maturation of 30S ribosomal subunits. The protein is Ribosome maturation factor RimP of Teredinibacter turnerae (strain ATCC 39867 / T7901).